Consider the following 1256-residue polypeptide: Splicing factor, arginine/serine-rich 19 (1256 aa).

Disordered regions lie at residues 1 to 33 (MEEE…SPSA), 158 to 343 (GKTV…APRR), 371 to 395 (ALSL…PEEE), 408 to 1030 (PRQP…TLPP), 1112 to 1152 (GSLP…DKYL), and 1221 to 1256 (FRKH…LPPL). Basic and acidic residues predominate over residues 7–27 (SRGKTEESGEDRGDGPPDRDP). Over residues 192–206 (SSASSSPSPSPSSSS) the composition is skewed to low complexity. Residues 207–222 (PSPPPPPPPPPPPALP) are compositionally biased toward pro residues. A compositionally biased stretch (basic and acidic residues) spans 227–236 (DIYDPFHPTD). Ser-240 carries the post-translational modification Phosphoserine. Residues 255–265 (TGSNPSSSAGT) are compositionally biased toward polar residues. Over residues 268-282 (PEEEEEEEEEEEEEG) the composition is skewed to acidic residues. Thr-328 carries the post-translational modification Phosphothreonine. Residues 382-393 (PEIEEGEIVQPE) show a composition bias toward acidic residues. Residues 412 to 424 (PASVATLASVAAP) are compositionally biased toward low complexity. Ser-442 and Ser-447 each carry phosphoserine. The segment covering 478 to 489 (KILTQRRERYRQ) has biased composition (basic residues). Residues Ser-491, Ser-493, Ser-510, Ser-518, and Ser-520 each carry the phosphoserine modification. Basic residues-rich tracts occupy residues 538–553 (TARR…RSRS) and 560–577 (RGGH…RRRS). A phosphoserine mark is found at Ser-577 and Ser-579. The segment covering 592–611 (RERHRGKRREGGKKKKKRSR) has biased composition (basic residues). Over residues 612 to 623 (SRAEKRSGDLEK) the composition is skewed to basic and acidic residues. Phosphothreonine is present on Thr-663. 2 positions are modified to phosphoserine: Ser-676 and Ser-682. Phosphotyrosine is present on Tyr-689. Phosphoserine occurs at positions 691 and 695. 2 stretches are compositionally biased toward basic and acidic residues: residues 696 to 709 (ADER…DRRR) and 719 to 741 (SREK…DRSS). Low complexity-rich tracts occupy residues 752-775 (PGSG…SCSS) and 793-804 (SSTTPAKDSSSS). Residue Lys-812 forms a Glycyl lysine isopeptide (Lys-Gly) (interchain with G-Cter in SUMO2) linkage. A compositionally biased stretch (basic and acidic residues) spans 813 to 831 (FSRDRESRSPFLKPDERAP). Phosphoserine is present on residues Ser-819 and Ser-821. The span at 843–875 (KPKKTKAKAKAGAKKAKGTKGKTKPSKTRKKVR) shows a compositional bias: basic residues. Phosphoserine is present on residues Ser-876, Ser-883, Ser-910, and Ser-912. Residues 922 to 935 (STPPPKVAPPPPAL) are compositionally biased toward pro residues. Thr-923 and Thr-936 each carry phosphothreonine. Residues 938-947 (DSQTVDSSCK) are compositionally biased toward polar residues. Phosphoserine is present on Ser-939. Thr-948 carries the phosphothreonine modification. A compositionally biased stretch (acidic residues) spans 969-984 (EEEEEEEEEEEEEEEQ). A compositionally biased stretch (low complexity) spans 985–1017 (QPATTTATSTAAAAPSTAPSAGSTAGDSGAEDG). The tract at residues 1131–1256 (PASDKREGSS…GGPGLPLPPL (126 aa)) is necessary for interaction with the CTD domain of POLR2A. The segment covering 1133 to 1152 (SDKREGSSSSEGRGDTDKYL) has biased composition (basic and acidic residues). Over residues 1244-1256 (PDKGGPGLPLPPL) the composition is skewed to pro residues.

This sequence belongs to the splicing factor SR family. As to quaternary structure, interacts with POLR2A.

The protein resides in the nucleus. In terms of biological role, may function in pre-mRNA splicing. The polypeptide is Splicing factor, arginine/serine-rich 19 (Scaf1) (Mus musculus (Mouse)).